The following is a 4699-amino-acid chain: Fat-like cadherin-related tumor suppressor homolog (4699 aa).

An N-terminal signal peptide occupies residues 1–38 (MFTMKIKKYVTPVKRKAFTILQWISLLCSLWLIPTVQS). At 39–4285 (KADEKHTATL…KNFSIEHISG (4247 aa)) the chain is on the extracellular side. Cadherin domains follow at residues 63-183 (SHSV…SPLF), 184-291 (YPTQ…APEI), 288-400 (APEI…IPIF), 401-507 (TQEI…DPIF), 508-613 (ENVN…RPQF), 614-716 (ERVN…SSIL), 773-877 (VNFP…RPVI), 878-980 (QKTL…APVF), 981-1088 (GVQE…APEF), 1089-1198 (DDFV…KPVY), 1194-1299 (DKPV…SPEF), 1300-1405 (DQRV…APLI), 1408-1506 (KTSE…PPQF), 1507-1612 (AKDV…HPEF), 1613-1717 (TAKI…PPKF), 1718-1815 (PTNN…IPYF), 1816-1932 (VQNE…PPVF), 1933-2033 (NERE…NFAF), 2034-2140 (QRES…CPLF), 2141-2241 (VNMP…MPVF), 2242-2341 (EKQF…YPEI), 2342-2449 (ESDI…APCF), 2450-2551 (VEPS…SPLF), 2552-2654 (DQST…VPYF), 2655-2763 (LLKE…IPTF), 2764-2860 (EKSS…YPKF), 2861-2967 (DNTF…APVF), 2968-3072 (KLPI…KPRY), 3068-3169 (LKPR…MPIF), 3170-3273 (SMAQ…PPEF), 3274-3378 (SMRQ…SPTF), 3379-3483 (LQNL…APIF), 3484-3588 (SSSN…PPIV), and 3589-3696 (TPLE…VIRF). N-linked (GlcNAc...) asparagine glycosylation is found at Asn68 and Asn159. Asn367 carries an N-linked (GlcNAc...) asparagine glycan. N-linked (GlcNAc...) asparagine glycans are attached at residues Asn782, Asn846, and Asn926. Residues Asn1109, Asn1201, Asn1315, Asn1442, Asn1476, and Asn1514 are each glycosylated (N-linked (GlcNAc...) asparagine). 19 disulfide bridges follow: Cys3807–Cys3819, Cys3814–Cys3851, Cys3853–Cys3862, Cys3869–Cys3880, Cys3874–Cys3891, Cys3893–Cys3902, Cys4071–Cys4105, Cys4117–Cys4128, Cys4122–Cys4138, Cys4140–Cys4149, Cys4156–Cys4167, Cys4161–Cys4177, Cys4179–Cys4188, Cys4194–Cys4205, Cys4199–Cys4214, Cys4216–Cys4224, Cys4231–Cys4242, Cys4236–Cys4251, and Cys4253–Cys4262. The 39-residue stretch at 3865–3903 (TVNACSTDPCSPQRICMPSGSALGYQCVCPKGFSGTYCE) folds into the EGF-like 1 domain. The Laminin G-like domain occupies 3921-4105 (AVSFGGKSYA…KRFTNVEFKC (185 aa)). EGF-like domains follow at residues 4113–4150 (RLGICGSQPCANSGICKELDTDVFECACQPRYSGKHCE), 4152–4189 (DLDPCSSGPCLFGGRCDYHGPNNYSCTCPIHLSGKRCE), 4190–4225 (YGKFCTPNPCKNGGICEEGDGISHCMCRGYTGPTCE), and 4227–4263 (DVDECENQPCGNGATCINEPGSFRCICPSYLTGASCG). The chain crosses the membrane as a helical span at residues 4286 to 4306 (IISGVAVVLVIISCVLCCVVL). Over 4307–4699 (KRSSSSKRRN…EFLPQQQTNN (393 aa)) the chain is Cytoplasmic.

Localizes where basal actin filaments terminate.

Its subcellular location is the cell membrane. Functionally, required for the planar polarity of actin filament orientation at the basal side of ovarian follicle cells. Required for proper egg chamber shape and elongation of the egg chamber during oogenesis. Required for the correct planar polarization of Rab10 within the basal follicle cell epithelium and is therefore indirectly involved in the Rab10-dependent remodeling of the basal membrane during egg chamber elongation. The sequence is that of Fat-like cadherin-related tumor suppressor homolog (kug) from Drosophila melanogaster (Fruit fly).